Reading from the N-terminus, the 519-residue chain is Transcription factor STP1 (519 aa).

Positions 16–35 (IPGKIYAFFRELVSGVIISK) are i. Residues 47–61 (ATKEEGKDAADEEKT) show a composition bias toward basic and acidic residues. Disordered stretches follow at residues 47–69 (ATKE…FPES) and 115–150 (LLGS…EHST). Residues 65 to 97 (LFPESNNIDRSLNGGCSVIPCSMDVSDLNTPIS) form an II region. A compositionally biased stretch (low complexity) spans 131 to 146 (STGVTSSPLSPSGSTP). Residues 160-182 (FICHYCDATFRIRGYLTRHIKKH) form a C2H2-type 1 zinc finger. The segment at 188–223 (YHCPFFNSATPPDLRCHNSGGFSRRDTYKTHLKARH) adopts a C2H2-type 2; atypical zinc-finger fold. The C2H2-type 3; atypical zinc-finger motif lies at 240 to 265 (GHCAQCGEYFSTIENFVENHIESGDC). Residues 357–382 (IKKKQQQVSGSTVTTPEVATQNNQEV) form a disordered region. Positions 364–381 (VSGSTVTTPEVATQNNQE) are enriched in polar residues.

Interacts (via Region II) with SSY5; protease component of the SPS-sensor. Post-translationally, phosphorylated by casein kinase I. Phosphorylation is not dependent on the extracellular amino acid levels, but is a prerequisite for proteolytic processing. In terms of processing, activated by the amino acid-induced proteolytic removal of an N-terminal inhibitory domain by serine protease SSY5, an intrinsic component of the SPS-sensor. Processing requires at least 2 components of the SCF(GRR1) ubiquitin ligase complex, namely the F-box protein GRR1 and the E2 enzyme CDC34, but does not depend on the proteasome. Processing is negatively regulated by the protein phosphatase 2A regulatory subunit RTS1.

It is found in the cell membrane. The protein resides in the nucleus. Its function is as follows. Transcription factor involved in the regulation of gene expression in response to extracellular amino acid levels. Synthesized as latent cytoplasmic precursor, which, upon a signal initiated by the plasma membrane SPS (SSY1-PTR3-SSY5) amino acid sensor system, becomes proteolytically activated and relocates to the nucleus, where it induces the expression of SPS-sensor-regulated genes, including the amino-acid permeases AGP1, BAP2, BAP3 and GNP1. Binding to promoters is facilitated by DAL81. Involved in the repression of genes subject to nitrogen catabolite repression and genes involved in stress response. Negatively regulated by inner nuclear membrane proteins ASI1, ASI2 and ASI3, which prevent unprocessed precursor forms that escape cytoplasmic anchoring from inducing SPS-sensor-regulated genes. May be involved in pre-tRNA splicing. This Saccharomyces cerevisiae (strain RM11-1a) (Baker's yeast) protein is Transcription factor STP1 (STP1).